A 154-amino-acid chain; its full sequence is MAKKVVNVVKLQIAAAKATPAPPVGPALGQAGINIAQFTKEFNARTADQAGSIIPVEISVFDDRSFEFVTKTPPAADQLRKIVGKGSGEPNTKKAGNVTLDQIRAIAENKMSDLNANDITNAMRMIEGTARSMGVTVDGVDLTVEGTAIKEDAE.

It belongs to the universal ribosomal protein uL11 family. As to quaternary structure, part of the ribosomal stalk of the 50S ribosomal subunit. Interacts with L10 and the large rRNA to form the base of the stalk. L10 forms an elongated spine to which L12 dimers bind in a sequential fashion forming a multimeric L10(L12)X complex. Post-translationally, one or more lysine residues are methylated.

Forms part of the ribosomal stalk which helps the ribosome interact with GTP-bound translation factors. The protein is Large ribosomal subunit protein uL11 of Leuconostoc mesenteroides subsp. mesenteroides (strain ATCC 8293 / DSM 20343 / BCRC 11652 / CCM 1803 / JCM 6124 / NCDO 523 / NBRC 100496 / NCIMB 8023 / NCTC 12954 / NRRL B-1118 / 37Y).